A 648-amino-acid chain; its full sequence is Protein kinase YegI (648 aa).

In terms of domain architecture, Protein kinase spans 15–302; it reads TTLGRELGKG…KAWVAALDSL (288 aa). Residues 21–29 and Lys41 each bind ATP; that span reads LGKGGEGAV. Residue Asp143 is the Proton acceptor of the active site.

Post-translationally, autophosphorylated. Dephosphorylated by PphC.

Functionally, probable serine/threonine kinase. This Escherichia coli (strain K12) protein is Protein kinase YegI (yegI).